Reading from the N-terminus, the 300-residue chain is Glycerol-3-phosphate dehydrogenase [NAD(P)+] (300 aa).

Tryptophan 11, lysine 33, and lysine 79 together coordinate NADPH. Residues lysine 79, glycine 107, and serine 109 each coordinate sn-glycerol 3-phosphate. An NADPH-binding site is contributed by alanine 111. Sn-glycerol 3-phosphate is bound by residues lysine 161, aspartate 214, serine 224, arginine 225, and asparagine 226. The Proton acceptor role is filled by lysine 161. Residue arginine 225 participates in NADPH binding. NADPH is bound by residues valine 249 and glutamate 251.

The protein belongs to the NAD-dependent glycerol-3-phosphate dehydrogenase family.

It localises to the cytoplasm. The catalysed reaction is sn-glycerol 3-phosphate + NAD(+) = dihydroxyacetone phosphate + NADH + H(+). The enzyme catalyses sn-glycerol 3-phosphate + NADP(+) = dihydroxyacetone phosphate + NADPH + H(+). It participates in membrane lipid metabolism; glycerophospholipid metabolism. In terms of biological role, catalyzes the reduction of the glycolytic intermediate dihydroxyacetone phosphate (DHAP) to sn-glycerol 3-phosphate (G3P), the key precursor for phospholipid synthesis. The sequence is that of Glycerol-3-phosphate dehydrogenase [NAD(P)+] from Campylobacter lari (strain RM2100 / D67 / ATCC BAA-1060).